Consider the following 350-residue polypeptide: S-adenosylmethionine:tRNA ribosyltransferase-isomerase (350 aa).

Belongs to the QueA family. In terms of assembly, monomer.

The protein resides in the cytoplasm. The catalysed reaction is 7-aminomethyl-7-carbaguanosine(34) in tRNA + S-adenosyl-L-methionine = epoxyqueuosine(34) in tRNA + adenine + L-methionine + 2 H(+). It functions in the pathway tRNA modification; tRNA-queuosine biosynthesis. Transfers and isomerizes the ribose moiety from AdoMet to the 7-aminomethyl group of 7-deazaguanine (preQ1-tRNA) to give epoxyqueuosine (oQ-tRNA). The protein is S-adenosylmethionine:tRNA ribosyltransferase-isomerase of Vibrio parahaemolyticus serotype O3:K6 (strain RIMD 2210633).